The primary structure comprises 273 residues: MARNGSLEEFLGVAVDAAKRAGEIIRKGFHETKHVVHKGQVDLVTETDKACEDLIFNHLKQHFPSHKFIGEETSAATGDFDLTDEPTWIVDPVDGTTNFVHGFPSVCVSIGLTIGKIPTVGVVYDPIIDELFTGINGKGAYLNGKPIKVSSQSELVKSLLGTEVGTTRDNLTVETTTRRINNLLFKVRSLRMCGSCALDLCWVACGRLELFYLIGYGGPWDVAGGAVIVKEAGGVLFDPSGSEFDITSQRVAATNPHLKEAFVEALQLSEYVS.

Residues glutamate 71, aspartate 91, valine 93, and aspartate 94 each coordinate Mg(2+). Glutamate 71 is a substrate binding site. Residues 93 to 96 (VDGT), 194 to 196 (GSC), and aspartate 221 each bind substrate. Aspartate 221 is a binding site for Mg(2+).

The protein belongs to the inositol monophosphatase superfamily. It depends on Mg(2+) as a cofactor. In terms of tissue distribution, expressed in seedlings, flowers, young and matures green fruits. Detected in roots and stems.

It catalyses the reaction a myo-inositol phosphate + H2O = myo-inositol + phosphate. It functions in the pathway polyol metabolism; myo-inositol biosynthesis; myo-inositol from D-glucose 6-phosphate: step 2/2. In terms of biological role, responsible for the provision of inositol required for synthesis of phosphatidylinositol and polyphosphoinositides. The chain is Inositol monophosphatase 1 (IMP1) from Solanum lycopersicum (Tomato).